The following is a 439-amino-acid chain: Dolichyl-diphosphooligosaccharide--protein glycosyltransferase 48 kDa subunit (439 aa).

Positions 1 to 25 (MELGAAARAWSLLWLLLPLLGLVGA) are cleaved as a signal peptide. Residues 27–410 (GPRTLVLLDN…YERFIPSAYP (384 aa)) lie on the Lumenal side of the membrane. Residues 411 to 430 (YYASAFSMMVGLFIFSVVFL) traverse the membrane as a helical segment. At 431 to 439 (HMKEKEKSD) the chain is on the cytoplasmic side.

It belongs to the DDOST 48 kDa subunit family. In terms of assembly, component of the oligosaccharyltransferase (OST) complex. OST exists in two different complex forms which contain common core subunits RPN1, RPN2, OST48, OST4, DAD1 and TMEM258, either STT3A or STT3B as catalytic subunits, and form-specific accessory subunits. STT3A complex assembly occurs through the formation of 3 subcomplexes. Subcomplex 1 contains RPN1 and TMEM258, subcomplex 2 contains the STT3A-specific subunits STT3A, DC2/OSTC, and KCP2 as well as the core subunit OST4, and subcomplex 3 contains RPN2, DAD1, and OST48. The STT3A complex can form stable complexes with the Sec61 complex or with both the Sec61 and TRAP complexes. Interacts with SMIM22.

It localises to the endoplasmic reticulum membrane. Its pathway is protein modification; protein glycosylation. Its function is as follows. Subunit of the oligosaccharyl transferase (OST) complex that catalyzes the initial transfer of a defined glycan (Glc(3)Man(9)GlcNAc(2) in eukaryotes) from the lipid carrier dolichol-pyrophosphate to an asparagine residue within an Asn-X-Ser/Thr consensus motif in nascent polypeptide chains, the first step in protein N-glycosylation. N-glycosylation occurs cotranslationally and the complex associates with the Sec61 complex at the channel-forming translocon complex that mediates protein translocation across the endoplasmic reticulum (ER). All subunits are required for a maximal enzyme activity. Required for the assembly of both SST3A- and SS3B-containing OST complexes. This is Dolichyl-diphosphooligosaccharide--protein glycosyltransferase 48 kDa subunit from Sus scrofa (Pig).